A 63-amino-acid chain; its full sequence is Large ribosomal subunit protein bL28 (63 aa).

Belongs to the bacterial ribosomal protein bL28 family.

The chain is Large ribosomal subunit protein bL28 from Desulfatibacillum aliphaticivorans.